The chain runs to 438 residues: Enolase (438 aa).

Substrate-binding residues include H159 and E168. The active-site Proton donor is E211. Positions 246, 297, and 322 each coordinate Mg(2+). Substrate contacts are provided by E297 and D322. K347 serves as the catalytic Proton acceptor. Residues 374–377 (SHRS) and K398 each bind substrate.

It belongs to the enolase family. Homodimer. It depends on Mg(2+) as a cofactor.

It localises to the cytoplasm. The catalysed reaction is (2R)-2-phosphoglycerate = phosphoenolpyruvate + H2O. It functions in the pathway carbohydrate degradation; glycolysis; pyruvate from D-glyceraldehyde 3-phosphate: step 4/5. The polypeptide is Enolase (enoA) (Penicillium chrysogenum (Penicillium notatum)).